We begin with the raw amino-acid sequence, 134 residues long: Profilin-2 (134 aa).

Cysteines 13 and 118 form a disulfide. The Involved in PIP2 interaction signature appears at 84 to 100 (AVIRGKKGSGGITIKKT). Position 114 is a phosphothreonine (Thr-114).

The protein belongs to the profilin family. Occurs in many kinds of cells as a complex with monomeric actin in a 1:1 ratio. In terms of processing, phosphorylated by MAP kinases.

The protein resides in the cytoplasm. It localises to the cytoskeleton. Its function is as follows. Binds to actin and affects the structure of the cytoskeleton. At high concentrations, profilin prevents the polymerization of actin, whereas it enhances it at low concentrations. This chain is Profilin-2, found in Olea europaea (Common olive).